The sequence spans 138 residues: Phosphoribosyl-AMP cyclohydrolase (138 aa).

D84 serves as a coordination point for Mg(2+). Zn(2+) is bound at residue C85. Residues D86 and D88 each contribute to the Mg(2+) site. Residues C102 and C109 each coordinate Zn(2+).

Belongs to the PRA-CH family. Homodimer. Mg(2+) is required as a cofactor. The cofactor is Zn(2+).

It is found in the cytoplasm. It catalyses the reaction 1-(5-phospho-beta-D-ribosyl)-5'-AMP + H2O = 1-(5-phospho-beta-D-ribosyl)-5-[(5-phospho-beta-D-ribosylamino)methylideneamino]imidazole-4-carboxamide. Its pathway is amino-acid biosynthesis; L-histidine biosynthesis; L-histidine from 5-phospho-alpha-D-ribose 1-diphosphate: step 3/9. Functionally, catalyzes the hydrolysis of the adenine ring of phosphoribosyl-AMP. This chain is Phosphoribosyl-AMP cyclohydrolase, found in Burkholderia cenocepacia (strain ATCC BAA-245 / DSM 16553 / LMG 16656 / NCTC 13227 / J2315 / CF5610) (Burkholderia cepacia (strain J2315)).